The following is a 153-amino-acid chain: Putative nuclear shuttle protein (153 aa).

The protein belongs to the nanoviridae nuclear shuttle protein family.

The protein resides in the host nucleus. It is found in the host cytoplasm. Putative nuclear shuttle protein. The protein is Putative nuclear shuttle protein (DNA-N) of Astragalus sinicus (Chinese milk vetch).